A 316-amino-acid chain; its full sequence is Ribose-phosphate pyrophosphokinase (316 aa).

Residues 39–41 and 98–99 each bind ATP; these read DGE and RQ. Mg(2+) is bound by residues H133 and D172. The active site involves K195. D-ribose 5-phosphate-binding positions include R197, D221, and 225–229; that span reads DTGGT.

The protein belongs to the ribose-phosphate pyrophosphokinase family. Class I subfamily. Homohexamer. Requires Mg(2+) as cofactor.

The protein localises to the cytoplasm. It carries out the reaction D-ribose 5-phosphate + ATP = 5-phospho-alpha-D-ribose 1-diphosphate + AMP + H(+). It participates in metabolic intermediate biosynthesis; 5-phospho-alpha-D-ribose 1-diphosphate biosynthesis; 5-phospho-alpha-D-ribose 1-diphosphate from D-ribose 5-phosphate (route I): step 1/1. Its function is as follows. Involved in the biosynthesis of the central metabolite phospho-alpha-D-ribosyl-1-pyrophosphate (PRPP) via the transfer of pyrophosphoryl group from ATP to 1-hydroxyl of ribose-5-phosphate (Rib-5-P). The protein is Ribose-phosphate pyrophosphokinase of Ralstonia nicotianae (strain ATCC BAA-1114 / GMI1000) (Ralstonia solanacearum).